A 114-amino-acid chain; its full sequence is Large ribosomal subunit protein bL21c (114 aa).

It belongs to the bacterial ribosomal protein bL21 family. Part of the 50S ribosomal subunit.

It localises to the plastid. Its subcellular location is the chloroplast. This protein binds to 23S rRNA. The chain is Large ribosomal subunit protein bL21c from Staurastrum punctulatum (Green alga).